The following is a 105-amino-acid chain: Wound-induced protein 1 (105 aa).

To potato anionic peroxidase. Ubiquitous.

This Solanum tuberosum (Potato) protein is Wound-induced protein 1 (WUN1).